We begin with the raw amino-acid sequence, 236 residues long: Protein Thf1 (236 aa).

Positions P180 to A220 form a coiled coil. The disordered stretch occupies residues E206–N236. Residues E227–N236 are compositionally biased toward polar residues.

It belongs to the THF1 family.

In terms of biological role, may be involved in photosynthetic membrane biogenesis. This chain is Protein Thf1, found in Cyanothece sp. (strain PCC 7425 / ATCC 29141).